Consider the following 210-residue polypeptide: Redox-sensing transcriptional repressor Rex (210 aa).

A DNA-binding region (H-T-H motif) is located at residues 16–55; it reads IYMRTLQELLEDDVDVISSERLAKQCGVNPAQIRKDLAYF. An NAD(+)-binding site is contributed by 90 to 95; sequence GLGNLG.

Belongs to the transcriptional regulatory Rex family. Homodimer.

It is found in the cytoplasm. Functionally, modulates transcription in response to changes in cellular NADH/NAD(+) redox state. The sequence is that of Redox-sensing transcriptional repressor Rex from Syntrophobacter fumaroxidans (strain DSM 10017 / MPOB).